An 81-amino-acid chain; its full sequence is Photosystem I iron-sulfur center (81 aa).

4Fe-4S ferredoxin-type domains follow at residues 1 to 31 (MSHK…MVPW) and 39 to 68 (IASS…IRVY). Residues C11, C14, C17, C21, C48, C51, C54, and C58 each contribute to the [4Fe-4S] cluster site.

As to quaternary structure, the cyanobacterial PSI reaction center is composed of one copy each of PsaA,B,C,D,E,F,I,J,K,L,M and X, and forms trimeric complexes. [4Fe-4S] cluster is required as a cofactor.

It is found in the cellular thylakoid membrane. It catalyses the reaction reduced [plastocyanin] + hnu + oxidized [2Fe-2S]-[ferredoxin] = oxidized [plastocyanin] + reduced [2Fe-2S]-[ferredoxin]. Apoprotein for the two 4Fe-4S centers FA and FB of photosystem I (PSI); essential for photochemical activity. FB is the terminal electron acceptor of PSI, donating electrons to ferredoxin. The C-terminus interacts with PsaA/B/D and helps assemble the protein into the PSI complex. Required for binding of PsaD and PsaE to PSI. PSI is a plastocyanin/cytochrome c6-ferredoxin oxidoreductase, converting photonic excitation into a charge separation, which transfers an electron from the donor P700 chlorophyll pair to the spectroscopically characterized acceptors A0, A1, FX, FA and FB in turn. This Rippkaea orientalis (strain PCC 8801 / RF-1) (Cyanothece sp. (strain PCC 8801)) protein is Photosystem I iron-sulfur center.